The chain runs to 327 residues: Phenylalanine--tRNA ligase alpha subunit (327 aa).

Position 252 (E252) interacts with Mg(2+).

It belongs to the class-II aminoacyl-tRNA synthetase family. Phe-tRNA synthetase alpha subunit type 1 subfamily. As to quaternary structure, tetramer of two alpha and two beta subunits. The cofactor is Mg(2+).

The protein resides in the cytoplasm. The catalysed reaction is tRNA(Phe) + L-phenylalanine + ATP = L-phenylalanyl-tRNA(Phe) + AMP + diphosphate + H(+). This Yersinia pestis bv. Antiqua (strain Angola) protein is Phenylalanine--tRNA ligase alpha subunit.